The primary structure comprises 236 residues: uncharacterized protein (236 aa).

The tract at residues M1–Q73 is disordered.

This is an uncharacterized protein from Homo sapiens (Human).